The following is a 197-amino-acid chain: Imidazoleglycerol-phosphate dehydratase (197 aa).

This sequence belongs to the imidazoleglycerol-phosphate dehydratase family.

The protein localises to the cytoplasm. It catalyses the reaction D-erythro-1-(imidazol-4-yl)glycerol 3-phosphate = 3-(imidazol-4-yl)-2-oxopropyl phosphate + H2O. Its pathway is amino-acid biosynthesis; L-histidine biosynthesis; L-histidine from 5-phospho-alpha-D-ribose 1-diphosphate: step 6/9. In Erythrobacter litoralis (strain HTCC2594), this protein is Imidazoleglycerol-phosphate dehydratase.